A 206-amino-acid chain; its full sequence is Transcriptional regulator GfcR (206 aa).

It belongs to the purine/pyrimidine phosphoribosyltransferase family. GfcR subfamily.

This chain is Transcriptional regulator GfcR, found in Methanosphaerula palustris (strain ATCC BAA-1556 / DSM 19958 / E1-9c).